We begin with the raw amino-acid sequence, 326 residues long: Nicotianamine synthase 2 (326 aa).

The protein belongs to the nicotianamine synthase (NAS)-like family. Expressed in roots.

The enzyme catalyses 3 S-adenosyl-L-methionine = nicotianamine + 3 S-methyl-5'-thioadenosine + 3 H(+). In terms of biological role, synthesizes nicotianamine, a polyamine that is the first intermediate in the synthesis of the phytosiderophores of the mugineic acid type found in gramineae which serve as a sensor for the physiological iron status within the plant, and/or might be involved in the transport of iron. The sequence is that of Nicotianamine synthase 2 (NAS2) from Oryza sativa subsp. indica (Rice).